The chain runs to 255 residues: Triosephosphate isomerase (255 aa).

Position 10–12 (10–12 (NWK)) interacts with substrate. His96 serves as the catalytic Electrophile. The Proton acceptor role is filled by Glu168. Residues Gly174, Ser213, and 234-235 (GG) each bind substrate.

This sequence belongs to the triosephosphate isomerase family. As to quaternary structure, homodimer.

It localises to the cytoplasm. It carries out the reaction D-glyceraldehyde 3-phosphate = dihydroxyacetone phosphate. It participates in carbohydrate biosynthesis; gluconeogenesis. It functions in the pathway carbohydrate degradation; glycolysis; D-glyceraldehyde 3-phosphate from glycerone phosphate: step 1/1. Functionally, involved in the gluconeogenesis. Catalyzes stereospecifically the conversion of dihydroxyacetone phosphate (DHAP) to D-glyceraldehyde-3-phosphate (G3P). In Histophilus somni (strain 2336) (Haemophilus somnus), this protein is Triosephosphate isomerase.